A 131-amino-acid polypeptide reads, in one-letter code: Small ribosomal subunit protein uS11 (131 aa).

This sequence belongs to the universal ribosomal protein uS11 family. In terms of assembly, part of the 30S ribosomal subunit. Interacts with proteins S7 and S18. Binds to IF-3.

Located on the platform of the 30S subunit, it bridges several disparate RNA helices of the 16S rRNA. Forms part of the Shine-Dalgarno cleft in the 70S ribosome. This chain is Small ribosomal subunit protein uS11, found in Helicobacter pylori (strain G27).